An 80-amino-acid polypeptide reads, in one-letter code: MSEPADIAAMTFEQALAELEQIVARLESGQAPLEDSIRMYERGAALKAHCETRLEAARLRVEKIVMGAGGAPASEPAEFG.

This sequence belongs to the XseB family. In terms of assembly, heterooligomer composed of large and small subunits.

The protein resides in the cytoplasm. It carries out the reaction Exonucleolytic cleavage in either 5'- to 3'- or 3'- to 5'-direction to yield nucleoside 5'-phosphates.. Its function is as follows. Bidirectionally degrades single-stranded DNA into large acid-insoluble oligonucleotides, which are then degraded further into small acid-soluble oligonucleotides. In Phenylobacterium zucineum (strain HLK1), this protein is Exodeoxyribonuclease 7 small subunit.